We begin with the raw amino-acid sequence, 363 residues long: Ribosomal RNA large subunit methyltransferase M (363 aa).

S-adenosyl-L-methionine-binding positions include Ser194, 227 to 230 (CPGG), Asp246, Asp266, and Asp284. The active-site Proton acceptor is Lys313.

The protein belongs to the class I-like SAM-binding methyltransferase superfamily. RNA methyltransferase RlmE family. RlmM subfamily. Monomer.

The protein resides in the cytoplasm. It catalyses the reaction cytidine(2498) in 23S rRNA + S-adenosyl-L-methionine = 2'-O-methylcytidine(2498) in 23S rRNA + S-adenosyl-L-homocysteine + H(+). In terms of biological role, catalyzes the 2'-O-methylation at nucleotide C2498 in 23S rRNA. The chain is Ribosomal RNA large subunit methyltransferase M from Haemophilus influenzae (strain PittEE).